The primary structure comprises 815 residues: Vacuolar proton translocating ATPase 100 kDa subunit (815 aa).

The Cytoplasmic segment spans residues 1 to 402 (MSFLRPSIWR…NAYGIAHYRE (402 aa)). Residues 403–421 (VNPAVLTIVTFPFLFGVMF) form a helical membrane-spanning segment. The Vacuolar segment spans residues 422–423 (GD). A helical membrane pass occupies residues 424-440 (VGHGALLLLSALGLISL). Over 441–454 (EKKLAGKKLNELIQ) the chain is Cytoplasmic. Residues 455–484 (MPFDGRYVLFLMSLFSIYVGFIYNECFSIP) form a helical membrane-spanning segment. The Vacuolar portion of the chain corresponds to 485–530 (MNIFGSQYNLNSTTGLYTYQHTDRVYPVGVDPLWKGAPNELVYYNS). Residues 531-550 (FKMKLSIIFGVVQMSVGICF) form a helical membrane-spanning segment. At 551-571 (SLLNYLNQKGPIKIVNILTQF) the chain is on the cytoplasmic side. The chain crosses the membrane as a helical span at residues 572-592 (VPQMIFLWSIFGYMSVLIILK). The Vacuolar segment spans residues 593 to 639 (WVVPYRSFEVDKVDPPFILPTIIAMFLSPGGTPDVVFFSGQGAVQTA). Residues 640 to 659 (LLFLALISIPVMLVIKPLFM) traverse the membrane as a helical segment. Residues 660-706 (KRFHFQEVERKKLGHHEEEHDDEALYTGHHGEEFEMGEVFVHQVIHT) are Cytoplasmic-facing. The chain crosses the membrane as a helical span at residues 707 to 731 (IEFVLGAVSNTASYLRLWALSLAHS). The Vacuolar segment spans residues 732–749 (ELSSVFWERILIGQVERG). Residues 750-788 (NPFLAFVGFGAWLGASVAVLLLMESLSAFLHALRLHWVE) form a helical membrane-spanning segment. Over 789-815 (FQNKFYIGDGVRFIPYSATRILSEDDE) the chain is Cytoplasmic.

The protein belongs to the V-ATPase 116 kDa subunit family. In terms of assembly, the V-ATPase is a heteromultimeric enzyme.

It localises to the cytoplasmic vesicle membrane. The protein resides in the endosome membrane. Its subcellular location is the vacuole membrane. The protein localises to the lysosome membrane. Its function is as follows. Essential component of the vacuolar proton pump (V-ATPase), a multimeric enzyme that catalyzes the translocation of protons across the membranes. Required for assembly and activity of the V-ATPase. Required in both the contractile vacuole system and the endosomal/lysosomal system. Also required for cytosolic pH regulation. This Dictyostelium discoideum (Social amoeba) protein is Vacuolar proton translocating ATPase 100 kDa subunit (vatM).